We begin with the raw amino-acid sequence, 195 residues long: Ribosomal RNA small subunit methyltransferase G (195 aa).

S-adenosyl-L-methionine contacts are provided by residues Gly-60, Leu-65, 114-115 (IE), and Arg-128.

Belongs to the methyltransferase superfamily. RNA methyltransferase RsmG family.

The protein resides in the cytoplasm. It catalyses the reaction guanosine(527) in 16S rRNA + S-adenosyl-L-methionine = N(7)-methylguanosine(527) in 16S rRNA + S-adenosyl-L-homocysteine. Its function is as follows. Specifically methylates the N7 position of guanine in position 527 of 16S rRNA. The protein is Ribosomal RNA small subunit methyltransferase G of Dinoroseobacter shibae (strain DSM 16493 / NCIMB 14021 / DFL 12).